We begin with the raw amino-acid sequence, 416 residues long: Histidine--tRNA ligase (416 aa).

Belongs to the class-II aminoacyl-tRNA synthetase family.

The protein resides in the cytoplasm. The catalysed reaction is tRNA(His) + L-histidine + ATP = L-histidyl-tRNA(His) + AMP + diphosphate + H(+). The protein is Histidine--tRNA ligase (hisS) of Methanocaldococcus jannaschii (strain ATCC 43067 / DSM 2661 / JAL-1 / JCM 10045 / NBRC 100440) (Methanococcus jannaschii).